We begin with the raw amino-acid sequence, 397 residues long: Argininosuccinate synthase (397 aa).

Residues 9-17 and A35 each bind ATP; that span reads AFSGGLDTS. 2 residues coordinate L-citrulline: Y88 and S93. Position 117 (G117) interacts with ATP. The L-aspartate site is built by T119, N123, and D124. N123 contributes to the L-citrulline binding site. R127 contributes to the L-citrulline binding site.

The protein belongs to the argininosuccinate synthase family. Type 1 subfamily. As to quaternary structure, homotetramer.

Its subcellular location is the cytoplasm. The catalysed reaction is L-citrulline + L-aspartate + ATP = 2-(N(omega)-L-arginino)succinate + AMP + diphosphate + H(+). The protein operates within amino-acid biosynthesis; L-arginine biosynthesis; L-arginine from L-ornithine and carbamoyl phosphate: step 2/3. The polypeptide is Argininosuccinate synthase (Xanthomonas campestris pv. campestris (strain ATCC 33913 / DSM 3586 / NCPPB 528 / LMG 568 / P 25)).